Reading from the N-terminus, the 227-residue chain is Phosphoribosylformylglycinamidine synthase subunit PurQ (227 aa).

One can recognise a Glutamine amidotransferase type-1 domain in the interval 3 to 225 (FAVIVLPGSN…VKNWRDTHVT (223 aa)). Catalysis depends on Cys86, which acts as the Nucleophile. Residues His194 and Glu196 contribute to the active site.

As to quaternary structure, part of the FGAM synthase complex composed of 1 PurL, 1 PurQ and 2 PurS subunits.

Its subcellular location is the cytoplasm. It carries out the reaction N(2)-formyl-N(1)-(5-phospho-beta-D-ribosyl)glycinamide + L-glutamine + ATP + H2O = 2-formamido-N(1)-(5-O-phospho-beta-D-ribosyl)acetamidine + L-glutamate + ADP + phosphate + H(+). The enzyme catalyses L-glutamine + H2O = L-glutamate + NH4(+). It participates in purine metabolism; IMP biosynthesis via de novo pathway; 5-amino-1-(5-phospho-D-ribosyl)imidazole from N(2)-formyl-N(1)-(5-phospho-D-ribosyl)glycinamide: step 1/2. Part of the phosphoribosylformylglycinamidine synthase complex involved in the purines biosynthetic pathway. Catalyzes the ATP-dependent conversion of formylglycinamide ribonucleotide (FGAR) and glutamine to yield formylglycinamidine ribonucleotide (FGAM) and glutamate. The FGAM synthase complex is composed of three subunits. PurQ produces an ammonia molecule by converting glutamine to glutamate. PurL transfers the ammonia molecule to FGAR to form FGAM in an ATP-dependent manner. PurS interacts with PurQ and PurL and is thought to assist in the transfer of the ammonia molecule from PurQ to PurL. This chain is Phosphoribosylformylglycinamidine synthase subunit PurQ, found in Bacillus pumilus (strain SAFR-032).